Reading from the N-terminus, the 50-residue chain is Large ribosomal subunit protein bL32c (50 aa).

Belongs to the bacterial ribosomal protein bL32 family.

It is found in the plastid. The chain is Large ribosomal subunit protein bL32c (rpl32) from Euglena longa (Euglenophycean alga).